Reading from the N-terminus, the 409-residue chain is O-methyltransferase pyiA (409 aa).

The span at 1-21 (MASQDGTTELLSQSVNSTCIP) shows a compositional bias: polar residues. The disordered stretch occupies residues 1-46 (MASQDGTTELLSQSVNSTCIPGSTYHVDRGRASSASTPPTSPPLSE). Asp271 serves as a coordination point for S-adenosyl-L-methionine. Catalysis depends on His317, which acts as the Proton acceptor.

It belongs to the class I-like SAM-binding methyltransferase superfamily. Cation-independent O-methyltransferase family.

It participates in mycotoxin biosynthesis. O-methyltransferase; part of the gene cluster that mediates the biosynthesis of the mycotoxin pyrichalasin H, a tyrosine-derived cytochalasan that inhibits the growth of rice seedlings, but also inhibits lymphocyte capping and actin polymerization and alters cell morphology. Pyrichalasin H is indicated as the responsible agent for the genus-specific pathogenicity of M.grisea toward crabgrass. The first step in the pathway is catalyzed by the O-methyltransferase pyiA which methylates free tyrosine to generate the precursor O-methyltyrosine. The hybrid PKS-NRPS pyiS, assisted by the enoyl reductase pyiC, are responsible for fusion of the O-methyltyrosine precursor and the polyketide backbone. The polyketide synthase module (PKS) of pyiS is responsible for the synthesis of the polyketide backbone and the downstream nonribosomal peptide synthetase (NRPS) amidates the carboxyl end of the polyketide with the O-methyltyrosine precursor. As the NRPS A-domain demonstrates substrate tolerance, pyiS can also use phenylalanine, tyrosine and even para-chlorophenylalanine as amino acid precursor, which leads to the production of novel cytochalasans, including halogenated cytochalasans. Because pyiS lacks a designated enoylreductase (ER) domain, the required activity is provided the enoyl reductase pyiC. Reduction by the hydrolyase pyiE leads to 1,5-dihydropyrrolone, which is substrate for dehydration and intra-molecular Diels-Alder cyclization by the Diels-Alderase pyiF to yield the required isoindolone-fused macrocycle. The tailoring cytochrome P450 monooxygenases piyD and piyG catalyze the hydroxylation at C-18 and C-7, respectivily, whereas the short-chain dehydrogenase/reductase pyiH reduces the carbonyl at C-21 in preparation for the transfer of an acetyl group by the acetyltransferase pyiB. These 3 reactions whose order is not clear yet, lead to the production of O-methylpyrichalasin J, a deacetylated pyrichalasin H. Finally, pyiB to converts O-methylpyrichalasin J into the final product pyrichalasin H via acetylation of C-21. This is O-methyltransferase pyiA from Pyricularia grisea (Crabgrass-specific blast fungus).